Reading from the N-terminus, the 902-residue chain is Cytosolic 10-formyltetrahydrofolate dehydrogenase (902 aa).

The segment at 1-310 (MKIAVIGQSL…PASQFFKGSA (310 aa)) is hydrolase domain. Ser-9 is subject to Phosphoserine. Lys-38 is modified (N6-succinyllysine). 88 to 90 (QFI) contributes to the (6R)-10-formyltetrahydrofolate binding site. The active-site Proton donor is the His-106. Asp-142 is a binding site for (6R)-10-formyltetrahydrofolate. The 78-residue stretch at 318 to 395 (EEELATAEAV…DFIQLLVRKL (78 aa)) folds into the Carrier domain. Ser-354 is modified (O-(pantetheine 4'-phosphoryl)serine). Residues 417-902 (TLQMPYQLFI…LRIKTVTFEY (486 aa)) form an aldehyde dehydrogenase domain region. Residues 571–573 (IPW) and 597–600 (KPAQ) contribute to the NADP(+) site. 2 positions are modified to phosphoserine: Ser-629 and Ser-631. NADP(+)-binding positions include 630–635 (GSLVGQ) and 650–651 (GS). Lys-660 carries the post-translational modification N6-succinyllysine. Glu-673 functions as the Proton acceptor in the catalytic mechanism. Position 673-674 (673-674 (EL)) interacts with NADP(+). The active-site Proton donor is Cys-707. Position 757 (Lys-757) interacts with NADP(+). Lys-767 carries the post-translational modification N6-succinyllysine. NADP(+) is bound at residue 804 to 806 (ESF). At Ser-825 the chain carries Phosphoserine. Lys-882 is modified (N6-acetyllysine).

The protein in the N-terminal section; belongs to the GART family. It in the C-terminal section; belongs to the aldehyde dehydrogenase family. ALDH1L subfamily. As to quaternary structure, homotetramer. Phosphopantetheinylation at Ser-354 by AASDHPPT is required for the formyltetrahydrofolate dehydrogenase activity. In terms of tissue distribution, highly expressed in liver (at protein level). Also expressed in pancreas, brain and lung (at protein level).

It localises to the cytoplasm. It is found in the cytosol. It catalyses the reaction (6R)-10-formyltetrahydrofolate + NADP(+) + H2O = (6S)-5,6,7,8-tetrahydrofolate + CO2 + NADPH + H(+). In terms of biological role, cytosolic 10-formyltetrahydrofolate dehydrogenase that catalyzes the NADP(+)-dependent conversion of 10-formyltetrahydrofolate to tetrahydrofolate and carbon dioxide. May also have an NADP(+)-dependent aldehyde dehydrogenase activity towards formaldehyde, acetaldehyde, propionaldehyde, and benzaldehyde. This is Cytosolic 10-formyltetrahydrofolate dehydrogenase from Mus musculus (Mouse).